We begin with the raw amino-acid sequence, 947 residues long: Pyruvate, phosphate dikinase 1, chloroplastic (947 aa).

The transit peptide at methionine 1–proline 71 directs the protein to the chloroplast. The segment at arginine 39–cysteine 60 is disordered. Residue threonine 527 is modified to Phosphothreonine; by PDRP1. Catalysis depends on histidine 529, which acts as the Tele-phosphohistidine intermediate. Substrate contacts are provided by arginine 635, arginine 692, glutamate 821, glycine 842, threonine 843, asparagine 844, and aspartate 845. A Mg(2+)-binding site is contributed by glutamate 821. Aspartate 845 contacts Mg(2+). Catalysis depends on cysteine 907, which acts as the Proton donor.

It belongs to the PEP-utilizing enzyme family. Homotetramer. It depends on Mg(2+) as a cofactor. In terms of processing, phosphorylation of Thr-527 in the dark inactivates the enzyme. Dephosphorylation upon light stimulation reactivates the enzyme. Phosphorylation increases during the first 20 days post-pollination and then remains constant through the 40-day mature seed stage. Reactivation by dephosphorylation during germination is negligible. As to expression, isoform 1 is only expressed in green leaves. Isoform 2 is found in roots, stems, rachis branches, leaf sheaths, green leaves and spikelets. The non-phosphorylated PPDK in mature seeds is endosperm-localized.

It is found in the plastid. Its subcellular location is the chloroplast. The protein resides in the cytoplasm. The enzyme catalyses pyruvate + phosphate + ATP = phosphoenolpyruvate + AMP + diphosphate + H(+). Its activity is regulated as follows. Activated by light-induced dephosphorylation. Inhibited by dark-induced phosphorylation. Both reactions are catalyzed by PDRP1. In terms of biological role, formation of phosphoenolpyruvate. The cytoplasmic isoform supports the biosynthetic processes in the nascent endosperm and provides an efficient mechanism for glycolytic ATP synthesis in oxygen depleted tissues. May be involved in regulating the flux of carbon into starch and fatty acids of seeds and in the remobilization of nitrogen reserves in senescing leaves. This chain is Pyruvate, phosphate dikinase 1, chloroplastic (PPDK1), found in Oryza sativa subsp. japonica (Rice).